The primary structure comprises 443 residues: 26S proteasome regulatory subunit 4 homolog B (443 aa).

2 disordered regions span residues 1–55 (MGQG…LPTV) and 87–108 (RLKP…LRGT). Basic and acidic residues-rich tracts occupy residues 12 to 28 (QGDR…KKFE) and 87 to 106 (RLKP…DDLR). 229 to 236 (GEPGTGKT) contributes to the ATP binding site. Glycyl lysine isopeptide (Lys-Gly) (interchain with G-Cter in ubiquitin) cross-links involve residues lysine 296 and lysine 433.

The protein belongs to the AAA ATPase family. In terms of assembly, component of the 19S regulatory particle (RP/PA700) base subcomplex of the 26S proteasome. The 26S proteasome is composed of a core protease (CP), known as the 20S proteasome, capped at one or both ends by the 19S regulatory particle (RP/PA700). The RP/PA700 complex is composed of at least 17 different subunits in two subcomplexes, the base and the lid, which form the portions proximal and distal to the 20S proteolytic core, respectively. Preferentially expressed in the root and shoot apical meristem.

The protein resides in the cytoplasm. It is found in the nucleus. In terms of biological role, the 26S protease is involved in the ATP-dependent degradation of ubiquitinated proteins. The regulatory (or ATPase) complex confers ATP dependency and substrate specificity to the 26S complex. Acts redundantly with RPT2A in the regulation of gametogenesis. With RPT2A plays a critical role in 26S proteasome assembly. In Arabidopsis thaliana (Mouse-ear cress), this protein is 26S proteasome regulatory subunit 4 homolog B.